Here is a 372-residue protein sequence, read N- to C-terminus: UDP-N-acetylenolpyruvoylglucosamine reductase (372 aa).

The FAD-binding PCMH-type domain maps to 29 to 205 (VGPTARRLIT…LEVEFALDAS (177 aa)). Arg-177 is an active-site residue. The Proton donor role is filled by Ser-260. The active site involves Glu-364.

Belongs to the MurB family. Requires FAD as cofactor.

Its subcellular location is the cytoplasm. The enzyme catalyses UDP-N-acetyl-alpha-D-muramate + NADP(+) = UDP-N-acetyl-3-O-(1-carboxyvinyl)-alpha-D-glucosamine + NADPH + H(+). Its pathway is cell wall biogenesis; peptidoglycan biosynthesis. Its function is as follows. Cell wall formation. This is UDP-N-acetylenolpyruvoylglucosamine reductase from Mycobacterium avium (strain 104).